Here is a 142-residue protein sequence, read N- to C-terminus: Fluoride-specific ion channel FluC 1 (142 aa).

4 consecutive transmembrane segments (helical) span residues Val23–Asp43, Leu54–Gly74, Gly79–Phe99, and Leu116–Leu136. The Na(+) site is built by Gly91 and Thr94.

It belongs to the fluoride channel Fluc/FEX (TC 1.A.43) family.

Its subcellular location is the cell membrane. It carries out the reaction fluoride(in) = fluoride(out). With respect to regulation, na(+) is not transported, but it plays an essential structural role and its presence is essential for fluoride channel function. Fluoride-specific ion channel. Important for reducing fluoride concentration in the cell, thus reducing its toxicity. The protein is Fluoride-specific ion channel FluC 1 of Nocardia farcinica (strain IFM 10152).